Reading from the N-terminus, the 322-residue chain is Atrochrysone carboxyl ACP thioesterase dmxR1 (322 aa).

The Zn(2+) site is built by His105, His107, Asp109, and His110. Asp109 (proton donor/acceptor) is an active-site residue.

The protein belongs to the metallo-beta-lactamase superfamily. The cofactor is Zn(2+).

It catalyses the reaction atrochrysone carboxyl-[ACP] + H2O = atrochrysone carboxylate + holo-[ACP] + H(+). Its pathway is secondary metabolite biosynthesis. In terms of biological role, atrochrysone carboxyl ACP thioesterase; part of the gene cluster that mediates the biosynthesis of the dimeric xanthones cryptosporioptides. The pathway begins with the synthesis of atrochrysone thioester by the polyketide synthase dmx-nrPKS. The atrochrysone carboxyl ACP thioesterase dmxR1 then breaks the thioester bond and releases the atrochrysone carboxylic acid from dmx-nrPKS. Atrochrysone carboxylic acid is decarboxylated by the decarboxylase dmxR15, and oxidized by the anthrone oxygenase dmxR16 to yield emodin. Emodin is then reduced to emodin hydroquinone by the oxidoreductase dmxR7. A-ring reduction by the short chain dehydrogenase dmxR18, dehydration by the scytalone dehydratase-like protein dmxR17 and probable spontaneous re-oxidation, results in overall deoxygenation to chrysophanol. Baeyer-Villiger oxidation by the Baeyer-Villiger monooxygenase (BVMO) dmxR6 then yields monodictylactone in equilibrium with monodictyphenone. In the case of the cryptosporioptides biosynthesis, monodictylactone is reduced at C-12 to an alcohol (by the short chain dehydrogenases dmxR12 or dmxR8) and hydroxylated at C-5 by dmxR9, yielding the electron-rich aromatic which could eliminate H(2)O to form the ortho-quinonemethide, followed by tautomerisation to paraquinone and complete the formal reduction to produce the 10-methylgroup. Conjugate addition of C-4a-OH to the resulting paraquinone by the monooxygenase dmxR10 then gives cyclohexadienone, which is then reduced at C-5 by the short chain dehydrogenase dmxR3 to give the dihydroxanthone. The 6,7-epoxide in the cryptosporioptides could be introduced by the cytochrome P450 monooxygenase dmxL3. The highly reducing PKS dmxL2 manufactures butyrate, which is further carboxylated by dmxL1 to form ethylmalonate. It is not yet clear whether the carboxylation occurs while the butyrate is attached to the ACP of dmxL2, but this unusual fungal metabolite could then be esterified to O-5 by the O-acetyltransferase dmxR13. Finally, dimerization performed by dmxR5 gives the observed dimers cryptosporioptides A, B and C as the final products of the pathway. The protein is Atrochrysone carboxyl ACP thioesterase dmxR1 of Cryptosporiopsis sp. (strain 8999).